A 130-amino-acid polypeptide reads, in one-letter code: Biotin carboxyl carrier protein (130 aa).

The segment at 20–64 is disordered; sequence EISESSVPAATPITPTTENTRAASDQKQQSQTPSPAATASAANTM. Residues 23 to 46 are compositionally biased toward polar residues; the sequence is ESSVPAATPITPTTENTRAASDQK. The segment covering 47–64 has biased composition (low complexity); sequence QQSQTPSPAATASAANTM. Positions 55–130 constitute a Biotinyl-binding domain; sequence AATASAANTM…NAGDNLITIA (76 aa). N6-biotinyllysine is present on lysine 96.

This chain is Biotin carboxyl carrier protein (bcc), found in Streptococcus mutans serotype c (strain ATCC 700610 / UA159).